The primary structure comprises 335 residues: tRNA N6-adenosine threonylcarbamoyltransferase (335 aa).

Positions 109, 113, and 130 each coordinate a divalent metal cation. Substrate is bound by residues 130–134 (YVSGG), aspartate 162, glycine 177, glutamate 181, and asparagine 266. Aspartate 294 lines the a divalent metal cation pocket.

This sequence belongs to the KAE1 / TsaD family. As to quaternary structure, component of the EKC/KEOPS complex composed of at least GON7, TP53RK, TPRKB, OSGEP and LAGE3; the whole complex dimerizes. Interacts with PRAME. The cofactor is a divalent metal cation. As to expression, widely expressed at low level. Expressed in heart, placenta, liver, kidney, lung, brain, skeletal muscle and pancreas.

It is found in the cytoplasm. Its subcellular location is the nucleus. It carries out the reaction L-threonylcarbamoyladenylate + adenosine(37) in tRNA = N(6)-L-threonylcarbamoyladenosine(37) in tRNA + AMP + H(+). In terms of biological role, component of the EKC/KEOPS complex that is required for the formation of a threonylcarbamoyl group on adenosine at position 37 (t(6)A37) in tRNAs that read codons beginning with adenine. The complex is probably involved in the transfer of the threonylcarbamoyl moiety of threonylcarbamoyl-AMP (TC-AMP) to the N6 group of A37. OSGEP likely plays a direct catalytic role in this reaction, but requires other protein(s) of the complex to fulfill this activity. The protein is tRNA N6-adenosine threonylcarbamoyltransferase of Homo sapiens (Human).